Here is a 297-residue protein sequence, read N- to C-terminus: Probable deoxyhypusine synthase (297 aa).

The Nucleophile role is filled by K265.

It belongs to the deoxyhypusine synthase family. The cofactor is NAD(+).

It carries out the reaction [eIF5A protein]-L-lysine + spermidine = [eIF5A protein]-deoxyhypusine + propane-1,3-diamine. It functions in the pathway protein modification; eIF5A hypusination. Its function is as follows. Catalyzes the NAD-dependent oxidative cleavage of spermidine and the subsequent transfer of the butylamine moiety of spermidine to the epsilon-amino group of a specific lysine residue of the eIF-5A precursor protein to form the intermediate deoxyhypusine residue. This chain is Probable deoxyhypusine synthase, found in Methanopyrus kandleri (strain AV19 / DSM 6324 / JCM 9639 / NBRC 100938).